A 521-amino-acid chain; its full sequence is Probable ATP-dependent RNA helicase Dbp45A (521 aa).

The Q motif motif lies at 7 to 35 (NPFQILGLRPWLVKQLTKLGLKGATPIQQ). The region spanning 38-209 (IPAILAGQDC…IFPIASDCFE (172 aa)) is the Helicase ATP-binding domain. 51–58 (AKTGSGKT) is an ATP binding site. Residues 157–160 (DEAD) carry the DEAD box motif. The Helicase C-terminal domain maps to 237 to 386 (VLIEALRKYR…EHPIDQRMVE (150 aa)). The tract at residues 448 to 521 (KRKLQHAEPA…GRADVKKDKA (74 aa)) is disordered. Basic and acidic residues-rich tracts occupy residues 460–482 (EEGK…FEKK) and 502–521 (LNKE…KDKA).

Belongs to the DEAD box helicase family. DDX49/DBP8 subfamily.

It carries out the reaction ATP + H2O = ADP + phosphate + H(+). Functionally, probable ATP-binding RNA helicase. This is Probable ATP-dependent RNA helicase Dbp45A (Dbp45A) from Drosophila melanogaster (Fruit fly).